We begin with the raw amino-acid sequence, 1031 residues long: Telomerase reverse transcriptase (1031 aa).

The region spanning 498 to 852 is the Reverse transcriptase domain; sequence KEVEEWKKSL…DYCDWIGISI (355 aa). The Mg(2+) site is built by Asp603, Asp781, and Asp782.

Belongs to the reverse transcriptase family. Telomerase subfamily. Component of the telomerase holoenzyme complex composed minimally of the catalytic subunit p123 and the telomerase RNA template component.

It localises to the nucleus. Its subcellular location is the chromosome. It is found in the telomere. The enzyme catalyses DNA(n) + a 2'-deoxyribonucleoside 5'-triphosphate = DNA(n+1) + diphosphate. Functionally, telomerase is a ribonucleoprotein enzyme essential for the replication of chromosome termini in most eukaryotes. It elongates telomeres. It is a reverse transcriptase that adds simple sequence repeats to chromosome ends by copying a template sequence within the RNA component of the enzyme. This is Telomerase reverse transcriptase from Euplotes aediculatus (Ciliate).